The following is a 297-amino-acid chain: Protein AKTIP homolog (297 aa).

Positions 13–75 are disordered; it reads FLSDLDEKSS…QRSPSGSSPE (63 aa). A compositionally biased stretch (basic and acidic residues) spans 17–42; sequence LDEKSSSSPHDEKKPGDGREVREEKS. The segment covering 59 to 75 has biased composition (polar residues); the sequence is MNLSIARQRSPSGSSPE. The UBC core domain maps to 84 to 232; sequence FLEYTLMAEY…VNECLRRCHN (149 aa).

It belongs to the ubiquitin-conjugating enzyme family. FTS subfamily.

The chain is Protein AKTIP homolog from Nematostella vectensis (Starlet sea anemone).